The primary structure comprises 730 residues: Polyribonucleotide nucleotidyltransferase (730 aa).

Mg(2+) is bound by residues D489 and D495. Residues 556–615 enclose the KH domain; the sequence is PKIDTIKVDVDKIKIVIGKGGETIDKIIEETGVKIDIDEDGNIAIYSSDQEAINRTKEII. One can recognise an S1 motif domain in the interval 625 to 693; it reads GEIYEAEVVR…DKGRIDASMK (69 aa). The interval 691–730 is disordered; that stretch reads SMKALLPRPPRSEKSNKEDHQSVRHHGSPKDDKGKEKYDK. Basic and acidic residues predominate over residues 700–730; that stretch reads PRSEKSNKEDHQSVRHHGSPKDDKGKEKYDK.

It belongs to the polyribonucleotide nucleotidyltransferase family. It depends on Mg(2+) as a cofactor.

The protein localises to the cytoplasm. The enzyme catalyses RNA(n+1) + phosphate = RNA(n) + a ribonucleoside 5'-diphosphate. Functionally, involved in mRNA degradation. Catalyzes the phosphorolysis of single-stranded polyribonucleotides processively in the 3'- to 5'-direction. In Streptococcus mutans serotype c (strain ATCC 700610 / UA159), this protein is Polyribonucleotide nucleotidyltransferase.